The chain runs to 34 residues: U10-ctenitoxin-Pr1a (34 aa).

Disulfide bonds link cysteine 2–cysteine 15, cysteine 9–cysteine 20, cysteine 14–cysteine 31, and cysteine 22–cysteine 29.

In terms of tissue distribution, expressed by the venom gland.

Its subcellular location is the secreted. Its function is as follows. Non-toxic to mice and insects. The protein is U10-ctenitoxin-Pr1a of Phoneutria reidyi (Brazilian Amazonian armed spider).